The chain runs to 119 residues: Large ribosomal subunit protein bL19 (119 aa).

Belongs to the bacterial ribosomal protein bL19 family.

This protein is located at the 30S-50S ribosomal subunit interface and may play a role in the structure and function of the aminoacyl-tRNA binding site. The polypeptide is Large ribosomal subunit protein bL19 (Idiomarina loihiensis (strain ATCC BAA-735 / DSM 15497 / L2-TR)).